A 493-amino-acid polypeptide reads, in one-letter code: Cysteine--tRNA ligase (493 aa).

A Zn(2+)-binding site is contributed by Cys29. The short motif at 31 to 41 (PTVYDFAHIGN) is the 'HIGH' region element. Residues Cys227, His252, and Glu256 each coordinate Zn(2+). Residues 285-289 (KMSKS) carry the 'KMSKS' region motif. Lys288 contacts ATP.

The protein belongs to the class-I aminoacyl-tRNA synthetase family. As to quaternary structure, monomer. Zn(2+) is required as a cofactor.

It is found in the cytoplasm. It catalyses the reaction tRNA(Cys) + L-cysteine + ATP = L-cysteinyl-tRNA(Cys) + AMP + diphosphate. The polypeptide is Cysteine--tRNA ligase (Rhodopseudomonas palustris (strain HaA2)).